Consider the following 328-residue polypeptide: Tetraacyldisaccharide 4'-kinase (328 aa).

55–62 (TAGGNGKT) lines the ATP pocket.

This sequence belongs to the LpxK family.

It carries out the reaction a lipid A disaccharide + ATP = a lipid IVA + ADP + H(+). Its pathway is glycolipid biosynthesis; lipid IV(A) biosynthesis; lipid IV(A) from (3R)-3-hydroxytetradecanoyl-[acyl-carrier-protein] and UDP-N-acetyl-alpha-D-glucosamine: step 6/6. Its function is as follows. Transfers the gamma-phosphate of ATP to the 4'-position of a tetraacyldisaccharide 1-phosphate intermediate (termed DS-1-P) to form tetraacyldisaccharide 1,4'-bis-phosphate (lipid IVA). This chain is Tetraacyldisaccharide 4'-kinase, found in Shigella boydii serotype 4 (strain Sb227).